The chain runs to 175 residues: Sialidase 85-1.3 (175 aa).

It belongs to the glycosyl hydrolase 33 family.

The enzyme catalyses Hydrolysis of alpha-(2-&gt;3)-, alpha-(2-&gt;6)-, alpha-(2-&gt;8)- glycosidic linkages of terminal sialic acid residues in oligosaccharides, glycoproteins, glycolipids, colominic acid and synthetic substrates.. Developmentally regulated neuraminidase implicated in parasite invasion of cells. May contribute to the pathology during T.cruzi infection by cleaving sialic acid from cells of the immune system. The chain is Sialidase 85-1.3 (SA85-1.3) from Trypanosoma cruzi.